The primary structure comprises 195 residues: Probable peroxygenase 4 (195 aa).

Residues 14 to 49 (EEDNFLQRHVAFFDRNKDGIVYPSETFQGFRAIGCG) form the EF-hand domain. His-22 is a heme binding site. Residues Asp-27, Asn-29, Asp-31, and Glu-38 each coordinate Ca(2+). The Proline-knot motif lies at 70 to 79 (PGKGFSIWFP). At Ser-177 the chain carries Phosphoserine.

The protein belongs to the caleosin family. Homodimer. It depends on heme b as a cofactor. Requires Ca(2+) as cofactor. Expressed in roots, leaves, stems, shoots, flowers and germinated seeds. Barely detected in dry seeds prior to germination. Preferentially expressed in vascular bundles and in guard cells.

The protein localises to the lipid droplet. It catalyses the reaction RH + ROOH = ROH + ROH.. Functionally, calcium-binding peroxygenase involved in the degradation of storage lipid in oil bodies. May be involved in the interaction between oil bodies and vacuoles during seed germination. Acts as a negative regulator of abscisic acid responses in non-seed tissues. The sequence is that of Probable peroxygenase 4 (PXG4) from Arabidopsis thaliana (Mouse-ear cress).